Reading from the N-terminus, the 100-residue chain is ATP-dependent Clp protease adapter protein ClpS (100 aa).

Belongs to the ClpS family. In terms of assembly, binds to the N-terminal domain of the chaperone ClpA.

Involved in the modulation of the specificity of the ClpAP-mediated ATP-dependent protein degradation. This chain is ATP-dependent Clp protease adapter protein ClpS, found in Nitratidesulfovibrio vulgaris (strain DSM 19637 / Miyazaki F) (Desulfovibrio vulgaris).